The primary structure comprises 1112 residues: Cytosolic carboxypeptidase 4 (1112 aa).

The disordered stretch occupies residues 291-345; that stretch reads TTEPPHDLPEEDFEDDGDDEVDKDSDTEDGKVEDDDLETDVNKLSSKPGLDRPEE. A compositionally biased stretch (acidic residues) spans 299 to 329; the sequence is PEEDFEDDGDDEVDKDSDTEDGKVEDDDLET. One can recognise a Peptidase M14 domain in the interval 732 to 1022; the sequence is YPYTYTALMT…HPVDGLQGLQ (291 aa). Positions 804, 807, and 901 each coordinate Zn(2+). Glu986 (proton donor/acceptor) is an active-site residue.

The protein belongs to the peptidase M14 family. In terms of assembly, interacts with MYLK. Interacts with TCF4. Zn(2+) is required as a cofactor. Expressed in corneal endothelium.

It localises to the cytoplasm. The protein localises to the cytosol. The enzyme catalyses (L-glutamyl)(n+1)-gamma-L-glutamyl-L-glutamyl-[protein] + H2O = (L-glutamyl)(n)-gamma-L-glutamyl-L-glutamyl-[protein] + L-glutamate. The catalysed reaction is C-terminal L-alpha-aminoacyl-L-glutamyl-L-glutamyl-[tubulin] + H2O = C-terminal L-alpha-aminoacyl-L-glutamyl-[tubulin] + L-glutamate. Metallocarboxypeptidase that mediates deglutamylation of tubulin and non-tubulin target proteins. Catalyzes the removal of polyglutamate side chains present on the gamma-carboxyl group of glutamate residues within the C-terminal tail of tubulin protein. Specifically cleaves tubulin long-side-chains, while it is not able to remove the branching point glutamate. Also catalyzes the removal of polyglutamate residues from the carboxy-terminus of non-tubulin proteins such as MYLK. This Homo sapiens (Human) protein is Cytosolic carboxypeptidase 4.